The sequence spans 171 residues: NADH-quinone oxidoreductase subunit I (171 aa).

2 4Fe-4S ferredoxin-type domains span residues 41–71 (LTRD…LQKT) and 81–110 (EFFR…LTPD). Positions 51, 54, 57, 61, 90, 93, 96, and 100 each coordinate [4Fe-4S] cluster.

The protein belongs to the complex I 23 kDa subunit family. In terms of assembly, NDH-1 is composed of 14 different subunits. Subunits NuoA, H, J, K, L, M, N constitute the membrane sector of the complex. The cofactor is [4Fe-4S] cluster.

The protein localises to the cell inner membrane. The catalysed reaction is a quinone + NADH + 5 H(+)(in) = a quinol + NAD(+) + 4 H(+)(out). Functionally, NDH-1 shuttles electrons from NADH, via FMN and iron-sulfur (Fe-S) centers, to quinones in the respiratory chain. The immediate electron acceptor for the enzyme in this species is believed to be ubiquinone. Couples the redox reaction to proton translocation (for every two electrons transferred, four hydrogen ions are translocated across the cytoplasmic membrane), and thus conserves the redox energy in a proton gradient. The protein is NADH-quinone oxidoreductase subunit I of Methylococcus capsulatus (strain ATCC 33009 / NCIMB 11132 / Bath).